Here is a 200-residue protein sequence, read N- to C-terminus: Flavin prenyltransferase UbiX (200 aa).

Residues 15 to 17, Thr41, 102 to 105, and Arg137 each bind FMN; these read GAS and SMGT. Dimethylallyl phosphate contacts are provided by Tyr167 and Lys183.

It belongs to the UbiX/PAD1 family.

The enzyme catalyses dimethylallyl phosphate + FMNH2 = prenylated FMNH2 + phosphate. In terms of biological role, flavin prenyltransferase that catalyzes the synthesis of the prenylated FMN cofactor (prenyl-FMN) for 4-hydroxy-3-polyprenylbenzoic acid decarboxylase UbiD. The prenyltransferase is metal-independent and links a dimethylallyl moiety from dimethylallyl monophosphate (DMAP) to the flavin N5 and C6 atoms of FMN. The polypeptide is Flavin prenyltransferase UbiX (Alkalihalophilus pseudofirmus (strain ATCC BAA-2126 / JCM 17055 / OF4) (Bacillus pseudofirmus)).